Reading from the N-terminus, the 368-residue chain is Galactoside 2-alpha-L-fucosyltransferase Sec1 (368 aa).

The Cytoplasmic segment spans residues 1-20 (MPSDSCLLSLTVLQRLRAIC). A helical; Signal-anchor for type II membrane protein transmembrane segment spans residues 21 to 41 (PPLSTFYLFFVIFVVSTIFHC). Topologically, residues 42 to 368 (HRRLGLVPAP…APKRHWGALL (327 aa)) are lumenal. Residues Asn195, Asn289, and Asn315 are each glycosylated (N-linked (GlcNAc...) asparagine).

This sequence belongs to the glycosyltransferase 11 family.

The protein localises to the golgi apparatus. The protein resides in the golgi stack membrane. The catalysed reaction is a ganglioside GM1 + GDP-beta-L-fucose = a ganglioside Fuc-GM1 + GDP + H(+). Its pathway is protein modification; protein glycosylation. In terms of biological role, catalyzes the transfer of alpha 1,2-linked fucose to ganglioside GM1 and galacto-N-biose. The sequence is that of Galactoside 2-alpha-L-fucosyltransferase Sec1 from Mus musculus (Mouse).